The primary structure comprises 349 residues: Flap endonuclease 1-B (349 aa).

Positions M1–R105 are N-domain. D34 is a binding site for Mg(2+). A DNA-binding site is contributed by R71. 5 residues coordinate Mg(2+): D87, E159, E161, D180, and D182. Residues D123–H254 form an I-domain region. E159 serves as a coordination point for DNA. DNA-binding residues include G232 and D234. Residue D234 coordinates Mg(2+).

Belongs to the XPG/RAD2 endonuclease family. FEN1 subfamily. Interacts with PCNA. Three molecules of FEN1 bind to one PCNA trimer with each molecule binding to one PCNA monomer. PCNA stimulates the nuclease activity without altering cleavage specificity. Mg(2+) serves as cofactor. Post-translationally, phosphorylated. Phosphorylation upon DNA damage induces relocalization to the nuclear plasma.

Its subcellular location is the nucleus. It localises to the nucleolus. The protein localises to the nucleoplasm. It is found in the mitochondrion. Its function is as follows. Structure-specific nuclease with 5'-flap endonuclease and 5'-3' exonuclease activities involved in DNA replication and repair. During DNA replication, cleaves the 5'-overhanging flap structure that is generated by displacement synthesis when DNA polymerase encounters the 5'-end of a downstream Okazaki fragment. It enters the flap from the 5'-end and then tracks to cleave the flap base, leaving a nick for ligation. Also involved in the long patch base excision repair (LP-BER) pathway, by cleaving within the apurinic/apyrimidinic (AP) site-terminated flap. Acts as a genome stabilization factor that prevents flaps from equilibrating into structures that lead to duplications and deletions. Also possesses 5'-3' exonuclease activity on nicked or gapped double-stranded DNA, and exhibits RNase H activity. Also involved in replication and repair of rDNA and in repairing mitochondrial DNA. The polypeptide is Flap endonuclease 1-B (Physcomitrium patens (Spreading-leaved earth moss)).